The sequence spans 372 residues: Silphinene synthase peniA (372 aa).

5 residues coordinate Mg(2+): Asp-116, Glu-121, Asn-263, Ser-267, and Glu-271. Residues Asp-116–Glu-121 carry the DDXXE motif motif.

The protein belongs to the terpene synthase family. Mg(2+) is required as a cofactor.

The enzyme catalyses (2E,6E)-farnesyl diphosphate = silphinene + diphosphate. Its pathway is secondary metabolite biosynthesis; terpenoid biosynthesis. Its function is as follows. Sesquiterpene cyclase; part of the gene cluster that mediates the biosynthesis of penifulvin A, a potent insecticidal sesquiterpene that features a [5.5.5.6]dioxafenestrane ring. Within the pathway, peniA catalyzes the first step and generates the angular triquinane scaffold silphinene via cyclization of the linear farnesyl pyrophosphate (FPP). The cytochrome P450 monooxygenase peniB and the flavin-dependent monooxygenase peniC then catalyze a series of oxidation reactions to transform silphinene into penifulvin A. The polypeptide is Silphinene synthase peniA (Penicillium patulum (Penicillium griseofulvum)).